The primary structure comprises 549 residues: Urocanate hydratase (549 aa).

Residues 46–47, glutamine 124, glutamate 190, arginine 195, 236–237, 257–261, 267–268, and tyrosine 316 each bind NAD(+); these read GG, NA, QTSAH, and YV. Residue cysteine 404 is part of the active site. Glycine 486 provides a ligand contact to NAD(+).

The protein belongs to the urocanase family. NAD(+) is required as a cofactor.

The protein localises to the cytoplasm. The enzyme catalyses 4-imidazolone-5-propanoate = trans-urocanate + H2O. The protein operates within amino-acid degradation; L-histidine degradation into L-glutamate; N-formimidoyl-L-glutamate from L-histidine: step 2/3. Catalyzes the conversion of urocanate to 4-imidazolone-5-propionate. In Thermoanaerobacter pseudethanolicus (strain ATCC 33223 / 39E) (Clostridium thermohydrosulfuricum), this protein is Urocanate hydratase.